A 406-amino-acid chain; its full sequence is Argininosuccinate synthase (406 aa).

ATP is bound at residue Ala-9–Ser-17. Tyr-86 is an L-citrulline binding site. Residue Gly-116 participates in ATP binding. Residues Thr-118, Asn-122, and Asp-123 each contribute to the L-aspartate site. Asn-122 provides a ligand contact to L-citrulline. L-citrulline contacts are provided by Arg-126, Ser-174, Ser-183, Glu-259, and Tyr-271.

Belongs to the argininosuccinate synthase family. Type 1 subfamily. Homotetramer.

The protein localises to the cytoplasm. It catalyses the reaction L-citrulline + L-aspartate + ATP = 2-(N(omega)-L-arginino)succinate + AMP + diphosphate + H(+). It participates in amino-acid biosynthesis; L-arginine biosynthesis; L-arginine from L-ornithine and carbamoyl phosphate: step 2/3. The chain is Argininosuccinate synthase from Geobacillus kaustophilus (strain HTA426).